The following is a 111-amino-acid chain: Putative pterin-4-alpha-carbinolamine dehydratase (111 aa).

Belongs to the pterin-4-alpha-carbinolamine dehydratase family.

The catalysed reaction is (4aS,6R)-4a-hydroxy-L-erythro-5,6,7,8-tetrahydrobiopterin = (6R)-L-erythro-6,7-dihydrobiopterin + H2O. The sequence is that of Putative pterin-4-alpha-carbinolamine dehydratase from Alkaliphilus metalliredigens (strain QYMF).